Reading from the N-terminus, the 164-residue chain is Pyruvoyl-dependent arginine decarboxylase (164 aa).

Pyruvic acid (Ser) is present on serine 52.

The protein belongs to the PdaD family. The cofactor is pyruvate.

The enzyme catalyses L-arginine + H(+) = agmatine + CO2. This chain is Pyruvoyl-dependent arginine decarboxylase, found in Methanococcus maripaludis (strain C7 / ATCC BAA-1331).